A 34-amino-acid chain; its full sequence is Calcitonin-like peptide 2 (34 aa).

A disulfide bridge connects residues Cys-2 and Cys-7. At Phe-34 the chain carries Phenylalanine amide.

In Odorrana schmackeri (Schmacker's frog), this protein is Calcitonin-like peptide 2.